Here is a 313-residue protein sequence, read N- to C-terminus: Beta-lactamase FAR-1 (313 aa).

Positions 1 to 28 are cleaved as a signal peptide; it reads MPGVDISFLKKSGRRTMAAAAVIALLGG. C29 is lipidated: N-palmitoyl cysteine. C29 carries S-diacylglycerol cysteine lipidation. S94 (acyl-ester intermediate) is an active-site residue. S154 is a binding site for substrate. The active-site Proton acceptor is E190. 258 to 260 contributes to the substrate binding site; that stretch reads KTG.

This sequence belongs to the class-A beta-lactamase family.

It is found in the cell membrane. It catalyses the reaction a beta-lactam + H2O = a substituted beta-amino acid. Inhibited by clavulanic acid, and at a low level by tazobactam and sulbactam. Its function is as follows. Confers high levels of resistance to amoxicillin, benzylpenicillin, piperacillin, ticarcillin and cephalothin. Also hydrolyzes aztreonam at a low level. Not active against ceftazidime, cefotaxime and imipenem. The polypeptide is Beta-lactamase FAR-1 (bla) (Nocardia farcinica (strain IFM 10152)).